Reading from the N-terminus, the 245-residue chain is tRNA (guanine-N(1)-)-methyltransferase (245 aa).

S-adenosyl-L-methionine contacts are provided by residues G113 and 133–138 (IGDYVL).

It belongs to the RNA methyltransferase TrmD family. Homodimer.

The protein resides in the cytoplasm. The catalysed reaction is guanosine(37) in tRNA + S-adenosyl-L-methionine = N(1)-methylguanosine(37) in tRNA + S-adenosyl-L-homocysteine + H(+). Its function is as follows. Specifically methylates guanosine-37 in various tRNAs. The sequence is that of tRNA (guanine-N(1)-)-methyltransferase from Oceanobacillus iheyensis (strain DSM 14371 / CIP 107618 / JCM 11309 / KCTC 3954 / HTE831).